Consider the following 469-residue polypeptide: 3-isopropylmalate dehydratase large subunit (469 aa).

The [4Fe-4S] cluster site is built by Cys-347, Cys-407, and Cys-410.

Belongs to the aconitase/IPM isomerase family. LeuC type 1 subfamily. Heterodimer of LeuC and LeuD. It depends on [4Fe-4S] cluster as a cofactor.

The catalysed reaction is (2R,3S)-3-isopropylmalate = (2S)-2-isopropylmalate. The protein operates within amino-acid biosynthesis; L-leucine biosynthesis; L-leucine from 3-methyl-2-oxobutanoate: step 2/4. In terms of biological role, catalyzes the isomerization between 2-isopropylmalate and 3-isopropylmalate, via the formation of 2-isopropylmaleate. In Prochlorococcus marinus (strain NATL2A), this protein is 3-isopropylmalate dehydratase large subunit.